Reading from the N-terminus, the 325-residue chain is Probable 4-hydroxy-tetrahydrodipicolinate reductase 2, chloroplastic (325 aa).

The N-terminal 32 residues, 1–32, are a transit peptide targeting the chloroplast; it reads MLSLRPPCTLSPAPWRRRRTLHGAAGTPQRVS. Residues 57-62, 149-151, and 172-175 each bind NAD(+); these read GCTGKM, GTT, and SPQM. The Proton donor/acceptor role is filled by His-208. Lys-212 serves as the catalytic Proton donor. 217 to 218 serves as a coordination point for (S)-2,3,4,5-tetrahydrodipicolinate; it reads GT.

It belongs to the DapB family.

The protein localises to the plastid. It localises to the chloroplast. The enzyme catalyses (S)-2,3,4,5-tetrahydrodipicolinate + NAD(+) + H2O = (2S,4S)-4-hydroxy-2,3,4,5-tetrahydrodipicolinate + NADH + H(+). It catalyses the reaction (S)-2,3,4,5-tetrahydrodipicolinate + NADP(+) + H2O = (2S,4S)-4-hydroxy-2,3,4,5-tetrahydrodipicolinate + NADPH + H(+). It functions in the pathway amino-acid biosynthesis; L-lysine biosynthesis via DAP pathway; (S)-tetrahydrodipicolinate from L-aspartate: step 4/4. Functionally, catalyzes the conversion of 4-hydroxy-tetrahydrodipicolinate (HTPA) to tetrahydrodipicolinate. This is Probable 4-hydroxy-tetrahydrodipicolinate reductase 2, chloroplastic (DAPB2) from Oryza sativa subsp. japonica (Rice).